A 599-amino-acid chain; its full sequence is Elongation factor 4 (599 aa).

Positions 5–187 (SHIRNFSIIA…ELVRLVPPPT (183 aa)) constitute a tr-type G domain. GTP is bound by residues 17-22 (DHGKST) and 134-137 (NKMD).

This sequence belongs to the TRAFAC class translation factor GTPase superfamily. Classic translation factor GTPase family. LepA subfamily.

Its subcellular location is the cell inner membrane. The enzyme catalyses GTP + H2O = GDP + phosphate + H(+). Functionally, required for accurate and efficient protein synthesis under certain stress conditions. May act as a fidelity factor of the translation reaction, by catalyzing a one-codon backward translocation of tRNAs on improperly translocated ribosomes. Back-translocation proceeds from a post-translocation (POST) complex to a pre-translocation (PRE) complex, thus giving elongation factor G a second chance to translocate the tRNAs correctly. Binds to ribosomes in a GTP-dependent manner. This Cellvibrio japonicus (strain Ueda107) (Pseudomonas fluorescens subsp. cellulosa) protein is Elongation factor 4.